Consider the following 277-residue polypeptide: Sarcosine/dimethylglycine N-methyltransferase (277 aa).

Belongs to the methyltransferase superfamily. Monomer.

It catalyses the reaction sarcosine + 2 S-adenosyl-L-methionine = glycine betaine + 2 S-adenosyl-L-homocysteine + 2 H(+). The catalysed reaction is sarcosine + S-adenosyl-L-methionine = N,N-dimethylglycine + S-adenosyl-L-homocysteine + H(+). It carries out the reaction N,N-dimethylglycine + S-adenosyl-L-methionine = glycine betaine + S-adenosyl-L-homocysteine + H(+). It functions in the pathway amine and polyamine biosynthesis; betaine biosynthesis via glycine pathway; betaine from glycine: step 2/3. It participates in amine and polyamine biosynthesis; betaine biosynthesis via glycine pathway; betaine from glycine: step 3/3. Its activity is regulated as follows. Inhibited by n-butylic acid and S-adenosyl-L-homocysteine. Its function is as follows. Catalyzes the methylation of sarcosine and dimethylglycine to dimethylglycine and betaine, respectively, with S-adenosylmethionine (AdoMet) acting as the methyl donor. Activity with sarcosine is much weaker than activity with dimethylglycine. This is Sarcosine/dimethylglycine N-methyltransferase from Aphanothece halophytica.